The chain runs to 676 residues: MTHYHNPLNGRKVLNQQFVLQAPFLPCGDQPEAIRQLSRGILDGIPSQVLLGTTGSGKTFTMANVIANVNVPTLVLAHNKTLAAQLYQEFKAFFPENAVEYFISYYDYYQPEAYIARSDTYIEKSLLINDEIDKLRLSATRSILERRDTLIVSSISCIYGIGSPDNYSSMALILEVGKEYPRSQLSAQLVRMHYQASASPQRSAFRERGSVIDIFLAYESDLAVRLEFVNDTLVSIEYTDPLTMIPSHTVPSVTLYPGSHYVTPEAVREQAIRTIREELEQRLLFFEGRPVEQERLFQRTTHDIEMIKEIGFCKGIENYSRHFTGAAPGEPPTCLLDYFPEDFLLIIDESHQTLPQLRAMYRGDQSRKQSLVEYGFRLPSAFDNRPLTYEEARRYFRRVVYVSATPGELEVQESRGHIIEQIIRPTGIPDPLPEIRPATGQIDDLLEEIRQRLRKDQEKILVVSVTKKLAEDIAAFLAELGIAAAYLHSGIETAERTQILTDLRLGTIDVLIGVNLLREGIDLPEVSLVAILDADKEGFLRSSASLIQFCGRAARNVHGKVIFYADRITPSMDHMLKETERRRQIQLDYNKKHNITPKPIIKPILANPITKEGAQEDSRPETQSTEDLESSIKQYEEAMYKAAQDFQFDEAAKYRDLMNAAKRQLLFKQGEDGNSK.

The 386-residue stretch at 39–424 (RGILDGIPSQ…RGHIIEQIIR (386 aa)) folds into the Helicase ATP-binding domain. 52–59 (GTTGSGKT) provides a ligand contact to ATP. The Beta-hairpin signature appears at 105–128 (YYDYYQPEAYIARSDTYIEKSLLI). The 164-residue stretch at 441–604 (QIDDLLEEIR…ITPKPIIKPI (164 aa)) folds into the Helicase C-terminal domain. Residues 611–631 (KEGAQEDSRPETQSTEDLESS) form a disordered region. The UVR domain occupies 629–664 (ESSIKQYEEAMYKAAQDFQFDEAAKYRDLMNAAKRQ).

It belongs to the UvrB family. In terms of assembly, forms a heterotetramer with UvrA during the search for lesions. Interacts with UvrC in an incision complex.

The protein resides in the cytoplasm. Its function is as follows. The UvrABC repair system catalyzes the recognition and processing of DNA lesions. A damage recognition complex composed of 2 UvrA and 2 UvrB subunits scans DNA for abnormalities. Upon binding of the UvrA(2)B(2) complex to a putative damaged site, the DNA wraps around one UvrB monomer. DNA wrap is dependent on ATP binding by UvrB and probably causes local melting of the DNA helix, facilitating insertion of UvrB beta-hairpin between the DNA strands. Then UvrB probes one DNA strand for the presence of a lesion. If a lesion is found the UvrA subunits dissociate and the UvrB-DNA preincision complex is formed. This complex is subsequently bound by UvrC and the second UvrB is released. If no lesion is found, the DNA wraps around the other UvrB subunit that will check the other stand for damage. In Chlamydia muridarum (strain MoPn / Nigg), this protein is UvrABC system protein B.